The sequence spans 342 residues: Protein pelota homolog (342 aa).

Belongs to the eukaryotic release factor 1 family. Pelota subfamily. Monomer. A divalent metal cation is required as a cofactor.

The protein localises to the cytoplasm. In terms of biological role, may function in recognizing stalled ribosomes, interact with stem-loop structures in stalled mRNA molecules, and effect endonucleolytic cleavage of the mRNA. May play a role in the release non-functional ribosomes and degradation of damaged mRNAs. Has endoribonuclease activity. The sequence is that of Protein pelota homolog from Methanocorpusculum labreanum (strain ATCC 43576 / DSM 4855 / Z).